The sequence spans 342 residues: Deoxyhypusine synthase regulatory subunit (342 aa).

Residues 72 to 76 (SNLIS), 98 to 100 (TAG), Glu-104, Asp-213, 282 to 283 (TG), and 316 to 317 (DA) contribute to the NAD(+) site.

The protein belongs to the deoxyhypusine synthase family. Heterotetramer formed by a homodimer of the non-catalytic regulatory subunit DHSp and a homodimer of the catalytic subunit DHSc where DHSc appears to bind spermidine and DHSp appears to bind NAD(+).

Its pathway is protein modification; eIF5A hypusination. In terms of biological role, required for the activation and stability of deoxyhypusine synthase DHSc. Required for cell growth and survival. This Trypanosoma brucei brucei (strain 927/4 GUTat10.1) protein is Deoxyhypusine synthase regulatory subunit.